Reading from the N-terminus, the 471-residue chain is ATP synthase subunit beta (471 aa).

Residue 157 to 164 (GGAGVGKT) coordinates ATP.

This sequence belongs to the ATPase alpha/beta chains family. As to quaternary structure, F-type ATPases have 2 components, CF(1) - the catalytic core - and CF(0) - the membrane proton channel. CF(1) has five subunits: alpha(3), beta(3), gamma(1), delta(1), epsilon(1). CF(0) has three main subunits: a(1), b(2) and c(9-12). The alpha and beta chains form an alternating ring which encloses part of the gamma chain. CF(1) is attached to CF(0) by a central stalk formed by the gamma and epsilon chains, while a peripheral stalk is formed by the delta and b chains.

It is found in the cell inner membrane. The enzyme catalyses ATP + H2O + 4 H(+)(in) = ADP + phosphate + 5 H(+)(out). Its function is as follows. Produces ATP from ADP in the presence of a proton gradient across the membrane. The catalytic sites are hosted primarily by the beta subunits. This Trichlorobacter lovleyi (strain ATCC BAA-1151 / DSM 17278 / SZ) (Geobacter lovleyi) protein is ATP synthase subunit beta.